A 340-amino-acid chain; its full sequence is S-adenosylmethionine:tRNA ribosyltransferase-isomerase (340 aa).

It belongs to the QueA family. In terms of assembly, monomer.

Its subcellular location is the cytoplasm. The enzyme catalyses 7-aminomethyl-7-carbaguanosine(34) in tRNA + S-adenosyl-L-methionine = epoxyqueuosine(34) in tRNA + adenine + L-methionine + 2 H(+). The protein operates within tRNA modification; tRNA-queuosine biosynthesis. Functionally, transfers and isomerizes the ribose moiety from AdoMet to the 7-aminomethyl group of 7-deazaguanine (preQ1-tRNA) to give epoxyqueuosine (oQ-tRNA). This chain is S-adenosylmethionine:tRNA ribosyltransferase-isomerase, found in Campylobacter concisus (strain 13826).